A 304-amino-acid polypeptide reads, in one-letter code: N-acetyl-D-glucosamine kinase (304 aa).

Residues 4–11 and 133–140 each bind ATP; these read GFDIGGTK and GFGGGLIF. Residues H157, C178, C180, and C185 each coordinate Zn(2+).

The protein belongs to the ROK (NagC/XylR) family. NagK subfamily.

It catalyses the reaction N-acetyl-D-glucosamine + ATP = N-acetyl-D-glucosamine 6-phosphate + ADP + H(+). It participates in cell wall biogenesis; peptidoglycan recycling. Catalyzes the phosphorylation of N-acetyl-D-glucosamine (GlcNAc) derived from cell-wall degradation, yielding GlcNAc-6-P. The sequence is that of N-acetyl-D-glucosamine kinase from Pasteurella multocida (strain Pm70).